The primary structure comprises 142 residues: Putative pre-16S rRNA nuclease (142 aa).

This sequence belongs to the YqgF nuclease family.

It is found in the cytoplasm. Could be a nuclease involved in processing of the 5'-end of pre-16S rRNA. The polypeptide is Putative pre-16S rRNA nuclease (Mesoplasma florum (strain ATCC 33453 / NBRC 100688 / NCTC 11704 / L1) (Acholeplasma florum)).